The sequence spans 164 residues: Ubiquitin-fold modifier-conjugating enzyme 1 (164 aa).

Cysteine 116 functions as the Glycyl thioester intermediate in the catalytic mechanism.

It belongs to the ubiquitin-conjugating enzyme family. UFC1 subfamily.

In terms of biological role, E2-like enzyme which forms an intermediate with UFM1 via a thioester linkage. In Drosophila sechellia (Fruit fly), this protein is Ubiquitin-fold modifier-conjugating enzyme 1.